A 751-amino-acid chain; its full sequence is Catalase-peroxidase (751 aa).

The segment at 1–21 (MSNESKCPFHQTAGGGTTNRD) is disordered. A cross-link (tryptophyl-tyrosyl-methioninium (Trp-Tyr) (with M-270)) is located at residues 90–244 (WHSAGTYRIG…LAAVQMGLIY (155 aa)). The Proton acceptor role is filled by His91. A cross-link (tryptophyl-tyrosyl-methioninium (Tyr-Met) (with W-90)) is located at residues 244-270 (YVNPEGPEGNPDPVASGKDIRETFGRM). A heme b-binding site is contributed by His285. Residues 365–390 (AHQWRPKEGKGAGTVPDAHDPGKKHA) form a disordered region.

It belongs to the peroxidase family. Peroxidase/catalase subfamily. In terms of assembly, homodimer or homotetramer. The cofactor is heme b. Formation of the three residue Trp-Tyr-Met cross-link is important for the catalase, but not the peroxidase activity of the enzyme.

The enzyme catalyses H2O2 + AH2 = A + 2 H2O. It carries out the reaction 2 H2O2 = O2 + 2 H2O. Bifunctional enzyme with both catalase and broad-spectrum peroxidase activity. In Pseudomonas putida (strain GB-1), this protein is Catalase-peroxidase.